The sequence spans 640 residues: MPGTGLGRLAKHVTAAAAVFLISTGAVLPAQAETAPGSTPSAAPAASVEKHPITTANNGNLHTWWHDNGVFSPAAPTQSDEVRRSSLYDVRVAQANQPQKAYDAFTYMSIPRSGKGKIGYTEEDGAEFSSEAGLTMSWSSFEYAKDVWVEVSLRTGQTISSADQVQIRPSSYNFEKQLVDADTVRIKVPYSDAGYRFSVEFEPQLYTAYNDMSGDSGKLTTEAEGNRPIHTEPRNSMMVFAEPKLRGEQKERLVPTQESGSIHYPEPGEVRNLNSVSAEIIYFRPGTYSMGSDYHAVLPANVKWVYLAPGAYVKGAFRFLHDTQSQYKVTGYGVLSGEQYVYEADTNNSYNHLSGASNCHSSCVKMLQFASADAEQKLDLQGVTVAEPPYHSFVVYGNEQTFHMNVENYKQVGSWYWQTDGIELYQGSTMKNTFFNANDDVLKMYHSDVSIDNTVVWKNENGPVVQWGWTPRNIDNVNVTNTTVIHNRMYWKDVKYNTCIFNSSSHWEDMGSTTKADPNTTVKNMRFENTTVEGMTNCAIRVYALSDTENIHIKNFNIGSWNGLDWTSQVSHLKRYTNSAGEKVTIGNELPDGNGLAIENYSVGGQVIEKSGGNWSDYQLGRLGFDGENWDSWNAWKSAP.

The signal sequence occupies residues 1-32; that stretch reads MPGTGLGRLAKHVTAAAAVFLISTGAVLPAQA.

Belongs to the glycosyl hydrolase 49 family.

The protein resides in the secreted. It carries out the reaction Endohydrolysis of (1-&gt;6)-alpha-D-glucosidic linkages in dextran.. This is Dextranase from Arthrobacter globiformis.